The chain runs to 250 residues: MASLRIEVISLFPEMFSAISEYGITSRAVKQGLLQLTCWNPRDYTTDRHHTVDDRPFGGGPGMVMKIKPLEDALVQARQAAGDAAKVIYLSPQGRQLNQAAVRELAQEEAIILIAGRYEGIDERFIEAHVDEEWSIGDYVLSGGELPAMVLIDAVTRLLPGALGHVDSAEEDSFTDGLLDCPHYTRPEVYADQRVPDVLLSGNHAHIRRWRLQQSLGRTYERRADLLESRSLSGEEKKLLAEYIRERDDS.

Residues Gly116 and 136–141 (IGDYVL) contribute to the S-adenosyl-L-methionine site.

This sequence belongs to the RNA methyltransferase TrmD family. Homodimer.

It is found in the cytoplasm. The enzyme catalyses guanosine(37) in tRNA + S-adenosyl-L-methionine = N(1)-methylguanosine(37) in tRNA + S-adenosyl-L-homocysteine + H(+). Specifically methylates guanosine-37 in various tRNAs. The polypeptide is tRNA (guanine-N(1)-)-methyltransferase (Pseudomonas syringae pv. tomato (strain ATCC BAA-871 / DC3000)).